A 172-amino-acid polypeptide reads, in one-letter code: MTEAVSNFEAPPMSRRVFLNALLSSSVGVVVVGTLYPVVKYFIPPSSGGAGEGVIAQDALGKPISVSELLATHAATDRVLAQGLKGDPTYIVIDNGAVANYGLNAVCTHLGCVVPWNAGENLFKCPCHGSQYAANGKVIRGPAPRSLELVSATVDGDNVRFSPWQGPDFREA.

The chain crosses the membrane as a helical span at residues 17–39 (VFLNALLSSSVGVVVVGTLYPVV). A Rieske domain is found at 61–161 (GKPISVSELL…ATVDGDNVRF (101 aa)). [2Fe-2S] cluster is bound by residues cysteine 107, histidine 109, cysteine 125, and histidine 128. A disulfide bond links cysteine 112 and cysteine 127.

The protein belongs to the Rieske iron-sulfur protein family. In terms of assembly, the 4 large subunits of the cytochrome b6-f complex are cytochrome b6, subunit IV (17 kDa polypeptide, PetD), cytochrome f and the Rieske protein, while the 4 small subunits are PetG, PetL, PetM and PetN. The complex functions as a dimer. [2Fe-2S] cluster serves as cofactor.

Its subcellular location is the cellular thylakoid membrane. It catalyses the reaction 2 oxidized [plastocyanin] + a plastoquinol + 2 H(+)(in) = 2 reduced [plastocyanin] + a plastoquinone + 4 H(+)(out). Functionally, component of the cytochrome b6-f complex, which mediates electron transfer between photosystem II (PSII) and photosystem I (PSI), cyclic electron flow around PSI, and state transitions. The protein is Cytochrome b6-f complex iron-sulfur subunit of Synechococcus sp. (strain JA-3-3Ab) (Cyanobacteria bacterium Yellowstone A-Prime).